Here is a 439-residue protein sequence, read N- to C-terminus: Proline--tRNA ligase (439 aa).

Belongs to the class-II aminoacyl-tRNA synthetase family. ProS type 2 subfamily. Homodimer.

Its subcellular location is the cytoplasm. It catalyses the reaction tRNA(Pro) + L-proline + ATP = L-prolyl-tRNA(Pro) + AMP + diphosphate. In terms of biological role, catalyzes the attachment of proline to tRNA(Pro) in a two-step reaction: proline is first activated by ATP to form Pro-AMP and then transferred to the acceptor end of tRNA(Pro). This is Proline--tRNA ligase from Rhodopseudomonas palustris (strain HaA2).